We begin with the raw amino-acid sequence, 163 residues long: Nucleotide-binding protein YajQ (163 aa).

The protein belongs to the YajQ family.

Functionally, nucleotide-binding protein. This chain is Nucleotide-binding protein YajQ, found in Escherichia coli O127:H6 (strain E2348/69 / EPEC).